The sequence spans 504 residues: Maturase K (504 aa).

This sequence belongs to the intron maturase 2 family. MatK subfamily.

Its subcellular location is the plastid. The protein localises to the chloroplast. Usually encoded in the trnK tRNA gene intron. Probably assists in splicing its own and other chloroplast group II introns. The protein is Maturase K of Quercus suber (Cork oak).